The following is a 44-amino-acid chain: U4-ctenitoxin-Co1a (44 aa).

4 disulfides stabilise this stretch: Cys-2–Cys-19, Cys-9–Cys-25, Cys-18–Cys-39, and Cys-27–Cys-37.

Expressed by the venom gland.

It is found in the secreted. In terms of biological role, omega-agatoxins are antagonists of voltage-gated calcium channels (Cav). Toxic to mice by intracerebroventricular injection. In Ctenus ornatus (Brazilian spider), this protein is U4-ctenitoxin-Co1a.